A 349-amino-acid chain; its full sequence is UDP-N-acetylenolpyruvoylglucosamine reductase (349 aa).

Residues F24–Q197 form the FAD-binding PCMH-type domain. The active site involves R173. Catalysis depends on S249, which acts as the Proton donor. E345 is a catalytic residue.

The protein belongs to the MurB family. It depends on FAD as a cofactor.

The protein localises to the cytoplasm. It carries out the reaction UDP-N-acetyl-alpha-D-muramate + NADP(+) = UDP-N-acetyl-3-O-(1-carboxyvinyl)-alpha-D-glucosamine + NADPH + H(+). The protein operates within cell wall biogenesis; peptidoglycan biosynthesis. Cell wall formation. This Burkholderia lata (strain ATCC 17760 / DSM 23089 / LMG 22485 / NCIMB 9086 / R18194 / 383) protein is UDP-N-acetylenolpyruvoylglucosamine reductase.